We begin with the raw amino-acid sequence, 385 residues long: 4-hydroxy-3-methylbut-2-en-1-yl diphosphate synthase (flavodoxin) (385 aa).

[4Fe-4S] cluster is bound by residues cysteine 280, cysteine 283, cysteine 315, and glutamate 322.

It belongs to the IspG family. Requires [4Fe-4S] cluster as cofactor.

It carries out the reaction (2E)-4-hydroxy-3-methylbut-2-enyl diphosphate + oxidized [flavodoxin] + H2O + 2 H(+) = 2-C-methyl-D-erythritol 2,4-cyclic diphosphate + reduced [flavodoxin]. Its pathway is isoprenoid biosynthesis; isopentenyl diphosphate biosynthesis via DXP pathway; isopentenyl diphosphate from 1-deoxy-D-xylulose 5-phosphate: step 5/6. Functionally, converts 2C-methyl-D-erythritol 2,4-cyclodiphosphate (ME-2,4cPP) into 1-hydroxy-2-methyl-2-(E)-butenyl 4-diphosphate. The sequence is that of 4-hydroxy-3-methylbut-2-en-1-yl diphosphate synthase (flavodoxin) from Streptomyces griseus subsp. griseus (strain JCM 4626 / CBS 651.72 / NBRC 13350 / KCC S-0626 / ISP 5235).